Reading from the N-terminus, the 299-residue chain is GTPase Era (299 aa).

One can recognise an Era-type G domain in the interval 5–175 (RSGFVCLVGR…IDVLAAALPP (171 aa)). A G1 region spans residues 13–20 (GRPNTGKS). 13–20 (GRPNTGKS) provides a ligand contact to GTP. Residues 39-43 (QTTRH) are G2. The segment at 60–63 (DTPG) is G3. GTP is bound by residues 60-64 (DTPGL) and 124-127 (TKID). A G4 region spans residues 124–127 (TKID). Residues 154 to 156 (VSA) form a G5 region. In terms of domain architecture, KH type-2 spans 206 to 285 (VRDELPHSLA…YLDLRVKVAK (80 aa)).

This sequence belongs to the TRAFAC class TrmE-Era-EngA-EngB-Septin-like GTPase superfamily. Era GTPase family. As to quaternary structure, monomer.

The protein localises to the cell envelope. The protein resides in the secreted. It is found in the cell wall. Exhibits GTPase activity. Binds RNA but is probably not involved in ribosome assembly in mycobacteria. This chain is GTPase Era, found in Mycolicibacterium paratuberculosis (strain ATCC BAA-968 / K-10) (Mycobacterium paratuberculosis).